The following is a 313-amino-acid chain: Aspartate carbamoyltransferase catalytic subunit (313 aa).

Residues Arg-58 and Thr-59 each coordinate carbamoyl phosphate. Lys-86 is a binding site for L-aspartate. Carbamoyl phosphate is bound by residues Arg-108, His-136, and Gln-139. 2 residues coordinate L-aspartate: Arg-169 and Arg-223. Positions 265 and 266 each coordinate carbamoyl phosphate.

It belongs to the aspartate/ornithine carbamoyltransferase superfamily. ATCase family. Heterododecamer (2C3:3R2) of six catalytic PyrB chains organized as two trimers (C3), and six regulatory PyrI chains organized as three dimers (R2).

It carries out the reaction carbamoyl phosphate + L-aspartate = N-carbamoyl-L-aspartate + phosphate + H(+). The protein operates within pyrimidine metabolism; UMP biosynthesis via de novo pathway; (S)-dihydroorotate from bicarbonate: step 2/3. In terms of biological role, catalyzes the condensation of carbamoyl phosphate and aspartate to form carbamoyl aspartate and inorganic phosphate, the committed step in the de novo pyrimidine nucleotide biosynthesis pathway. This chain is Aspartate carbamoyltransferase catalytic subunit, found in Anaeromyxobacter sp. (strain K).